The following is a 1067-amino-acid chain: Chitinase-like protein C25A8.4 (1067 aa).

Positions 1-18 (MGIKTLIWLSILVVGIYC) are cleaved as a signal peptide. GH18 domains are found at residues 26–364 (PVHY…IRNT), 372–727 (CTRL…QVCQ), and 743–1067 (FVVS…HKCR). A disulfide bond links C30 and C51. N47 and N216 each carry an N-linked (GlcNAc...) asparagine glycan. Residues C376 and C397 are joined by a disulfide bond. N475, N538, and N710 each carry an N-linked (GlcNAc...) asparagine glycan. C747 and C768 form a disulfide bridge. Residues N797 and N830 are each glycosylated (N-linked (GlcNAc...) asparagine). The active-site Proton donor is the E855. N-linked (GlcNAc...) asparagine glycans are attached at residues N887, N933, and N1010.

The protein belongs to the glycosyl hydrolase 18 family.

The protein localises to the secreted. Putative chitinase. The polypeptide is Chitinase-like protein C25A8.4 (cht-3) (Caenorhabditis elegans).